The primary structure comprises 190 residues: dTTP/UTP pyrophosphatase (190 aa).

The active-site Proton acceptor is the Asp-67.

The protein belongs to the Maf family. YhdE subfamily. It depends on a divalent metal cation as a cofactor.

It is found in the cytoplasm. The catalysed reaction is dTTP + H2O = dTMP + diphosphate + H(+). It catalyses the reaction UTP + H2O = UMP + diphosphate + H(+). In terms of biological role, nucleoside triphosphate pyrophosphatase that hydrolyzes dTTP and UTP. May have a dual role in cell division arrest and in preventing the incorporation of modified nucleotides into cellular nucleic acids. The polypeptide is dTTP/UTP pyrophosphatase (Aquifex aeolicus (strain VF5)).